The chain runs to 96 residues: MDLATMLQNLVTEGGSIGWGLYYLGKLLGAGVAMGIGAIGPGVGEGNIGAHAMDAMARQPEMSGNLTTRMLLAMAVTESTGLYSLVVALILLFVLP.

A run of 2 helical transmembrane segments spans residues 28–50 (LGAGVAMGIGAIGPGVGEGNIGA) and 75–95 (AVTESTGLYSLVVALILLFVL).

The protein belongs to the ATPase C chain family. In terms of assembly, F-type ATPases have 2 components, F(1) - the catalytic core - and F(0) - the membrane proton channel. F(1) has five subunits: alpha(3), beta(3), gamma(1), delta(1), epsilon(1). F(0) has three main subunits: a(1), b(2) and c(10-14). The alpha and beta chains form an alternating ring which encloses part of the gamma chain. F(1) is attached to F(0) by a central stalk formed by the gamma and epsilon chains, while a peripheral stalk is formed by the delta and b chains.

It localises to the cell inner membrane. In terms of biological role, f(1)F(0) ATP synthase produces ATP from ADP in the presence of a proton or sodium gradient. F-type ATPases consist of two structural domains, F(1) containing the extramembraneous catalytic core and F(0) containing the membrane proton channel, linked together by a central stalk and a peripheral stalk. During catalysis, ATP synthesis in the catalytic domain of F(1) is coupled via a rotary mechanism of the central stalk subunits to proton translocation. Its function is as follows. Key component of the F(0) channel; it plays a direct role in translocation across the membrane. A homomeric c-ring of between 10-14 subunits forms the central stalk rotor element with the F(1) delta and epsilon subunits. The sequence is that of ATP synthase subunit c from Petrotoga mobilis (strain DSM 10674 / SJ95).